Reading from the N-terminus, the 379-residue chain is Chaperone protein DnaJ (379 aa).

One can recognise a J domain in the interval 6–71; that stretch reads DYYEVLGVDK…QKRSRYDQFG (66 aa). The CR-type zinc-finger motif lies at 138 to 220; the sequence is GVEREINVSK…CNGKGRLRST (83 aa). Zn(2+)-binding residues include Cys-151, Cys-154, Cys-168, Cys-171, Cys-194, Cys-197, Cys-208, and Cys-211. 4 CXXCXGXG motif repeats span residues 151–158, 168–175, 194–201, and 208–215; these read CSKCTGSG, CNHCNGTG, CDACKGEG, and CPACNGKG.

The protein belongs to the DnaJ family. Homodimer. Requires Zn(2+) as cofactor.

Its subcellular location is the cytoplasm. In terms of biological role, participates actively in the response to hyperosmotic and heat shock by preventing the aggregation of stress-denatured proteins and by disaggregating proteins, also in an autonomous, DnaK-independent fashion. Unfolded proteins bind initially to DnaJ; upon interaction with the DnaJ-bound protein, DnaK hydrolyzes its bound ATP, resulting in the formation of a stable complex. GrpE releases ADP from DnaK; ATP binding to DnaK triggers the release of the substrate protein, thus completing the reaction cycle. Several rounds of ATP-dependent interactions between DnaJ, DnaK and GrpE are required for fully efficient folding. Also involved, together with DnaK and GrpE, in the DNA replication of plasmids through activation of initiation proteins. The chain is Chaperone protein DnaJ from Ruminiclostridium cellulolyticum (strain ATCC 35319 / DSM 5812 / JCM 6584 / H10) (Clostridium cellulolyticum).